The primary structure comprises 51 residues: Large ribosomal subunit protein eL39 (51 aa).

The protein belongs to the eukaryotic ribosomal protein eL39 family. As to quaternary structure, interacts with impact.

The protein is Large ribosomal subunit protein eL39 (rpl39) of Ictalurus punctatus (Channel catfish).